The following is a 334-amino-acid chain: MIKAFLIERRSWIAAFLFQQALMLFIAFVDPSISFGNVLYMVYLCILFFIIFLWFRYRKETAFYKSLKTWENNLDVTAINEPETPFEAMVERSIAGQTEHLKQTAARHRLALENEKDELMAWIHEVKTPLTAMHLIIDRMEEKALKSQLSYEWLRIHLLLDQQLHQKRISFIENDLSVEFIQLQPLIFKEIKDLQSWCIQKGIGFDIQLEAKEVLSDAKWLAFIIRQLLTNAVKYSEASEIEIKSFQKGEQTQLQVKDCGRGIDPKDVPRIFDKGFTSTTDHHDQASTGMGLYLAKKAAAPLLIHIDVESEFGAGTVFTLTFPIRNQFEHVISV.

At 1–12 (MIKAFLIERRSW) the chain is on the cytoplasmic side. A helical transmembrane segment spans residues 13 to 33 (IAAFLFQQALMLFIAFVDPSI). Position 34 (Ser34) is a topological domain, extracellular. A helical transmembrane segment spans residues 35–55 (FGNVLYMVYLCILFFIIFLWF). The Cytoplasmic portion of the chain corresponds to 56–334 (RYRKETAFYK…RNQFEHVISV (279 aa)). Residues 121-326 (AWIHEVKTPL…VFTLTFPIRN (206 aa)) form the Histidine kinase domain. His124 carries the post-translational modification Phosphohistidine; by autocatalysis.

It localises to the cell membrane. It catalyses the reaction ATP + protein L-histidine = ADP + protein N-phospho-L-histidine.. Member of the two-component regulatory system BceS/BceR involved in the regulation of bacitracin resistance. Activates BceR in response to extracellular bacitracin. The protein is Sensor protein BceS (bceS) of Bacillus subtilis (strain 168).